Reading from the N-terminus, the 431-residue chain is Hydroxylamine reductase (431 aa).

Cys-5, Cys-8, Cys-17, and Cys-23 together coordinate [4Fe-4S] cluster. 8 residues coordinate hybrid [4Fe-2O-2S] cluster: His-131, Glu-155, Cys-199, Cys-286, Cys-314, Cys-339, Glu-373, and Lys-375. A Cysteine persulfide modification is found at Cys-286.

The protein belongs to the HCP family. [4Fe-4S] cluster serves as cofactor. The cofactor is hybrid [4Fe-2O-2S] cluster.

It localises to the cytoplasm. It catalyses the reaction A + NH4(+) + H2O = hydroxylamine + AH2 + H(+). Its function is as follows. Catalyzes the reduction of hydroxylamine to form NH(3) and H(2)O. This is Hydroxylamine reductase from Thermotoga maritima (strain ATCC 43589 / DSM 3109 / JCM 10099 / NBRC 100826 / MSB8).